The primary structure comprises 96 residues: Co-chaperonin GroES (96 aa).

It belongs to the GroES chaperonin family. As to quaternary structure, heptamer of 7 subunits arranged in a ring. Interacts with the chaperonin GroEL.

It is found in the cytoplasm. Its function is as follows. Together with the chaperonin GroEL, plays an essential role in assisting protein folding. The GroEL-GroES system forms a nano-cage that allows encapsulation of the non-native substrate proteins and provides a physical environment optimized to promote and accelerate protein folding. GroES binds to the apical surface of the GroEL ring, thereby capping the opening of the GroEL channel. In Actinobacillus succinogenes (strain ATCC 55618 / DSM 22257 / CCUG 43843 / 130Z), this protein is Co-chaperonin GroES.